The following is a 262-amino-acid chain: Adenosylcobinamide-GDP ribazoletransferase (262 aa).

Transmembrane regions (helical) follow at residues 43–63 (YFGL…WLTQ), 66–86 (LPAG…TGGF), 120–140 (GALA…ELAL), 146–166 (AGSA…SLIF), 191–211 (LFIL…IAAL), and 242–262 (AAQQ…GGIL).

The protein belongs to the CobS family. Mg(2+) is required as a cofactor.

It localises to the cell inner membrane. It catalyses the reaction alpha-ribazole + adenosylcob(III)inamide-GDP = adenosylcob(III)alamin + GMP + H(+). The enzyme catalyses alpha-ribazole 5'-phosphate + adenosylcob(III)inamide-GDP = adenosylcob(III)alamin 5'-phosphate + GMP + H(+). The protein operates within cofactor biosynthesis; adenosylcobalamin biosynthesis; adenosylcobalamin from cob(II)yrinate a,c-diamide: step 7/7. Its function is as follows. Joins adenosylcobinamide-GDP and alpha-ribazole to generate adenosylcobalamin (Ado-cobalamin). Also synthesizes adenosylcobalamin 5'-phosphate from adenosylcobinamide-GDP and alpha-ribazole 5'-phosphate. The polypeptide is Adenosylcobinamide-GDP ribazoletransferase (Shewanella oneidensis (strain ATCC 700550 / JCM 31522 / CIP 106686 / LMG 19005 / NCIMB 14063 / MR-1)).